The primary structure comprises 343 residues: tRNA N6-adenosine threonylcarbamoyltransferase (343 aa).

The Fe cation site is built by histidine 115 and histidine 119. Substrate-binding positions include 138-142 (LVSGA), aspartate 171, glycine 184, and asparagine 276. Aspartate 304 lines the Fe cation pocket.

The protein belongs to the KAE1 / TsaD family. Fe(2+) serves as cofactor.

The protein resides in the cytoplasm. The catalysed reaction is L-threonylcarbamoyladenylate + adenosine(37) in tRNA = N(6)-L-threonylcarbamoyladenosine(37) in tRNA + AMP + H(+). Its function is as follows. Required for the formation of a threonylcarbamoyl group on adenosine at position 37 (t(6)A37) in tRNAs that read codons beginning with adenine. Is involved in the transfer of the threonylcarbamoyl moiety of threonylcarbamoyl-AMP (TC-AMP) to the N6 group of A37, together with TsaE and TsaB. TsaD likely plays a direct catalytic role in this reaction. In Buchnera aphidicola subsp. Cinara cedri (strain Cc), this protein is tRNA N6-adenosine threonylcarbamoyltransferase.